The sequence spans 124 residues: Large ribosomal subunit protein bL20 (124 aa).

It belongs to the bacterial ribosomal protein bL20 family.

Its function is as follows. Binds directly to 23S ribosomal RNA and is necessary for the in vitro assembly process of the 50S ribosomal subunit. It is not involved in the protein synthesizing functions of that subunit. The polypeptide is Large ribosomal subunit protein bL20 (Ehrlichia chaffeensis (strain ATCC CRL-10679 / Arkansas)).